We begin with the raw amino-acid sequence, 440 residues long: Ribulose bisphosphate carboxylase large chain (440 aa).

Position 3 is an N6,N6,N6-trimethyllysine (lysine 3). Residues asparagine 112 and threonine 162 each contribute to the substrate site. The active-site Proton acceptor is the lysine 164. Lysine 166 provides a ligand contact to substrate. The Mg(2+) site is built by lysine 190, aspartate 192, and glutamate 193. N6-carboxylysine is present on lysine 190. Histidine 283 functions as the Proton acceptor in the catalytic mechanism. Positions 284, 316, and 368 each coordinate substrate.

It belongs to the RuBisCO large chain family. Type I subfamily. Heterohexadecamer of 8 large chains and 8 small chains; disulfide-linked. The disulfide link is formed within the large subunit homodimers. The cofactor is Mg(2+). Post-translationally, the disulfide bond which can form in the large chain dimeric partners within the hexadecamer appears to be associated with oxidative stress and protein turnover.

It is found in the plastid. Its subcellular location is the chloroplast. It carries out the reaction 2 (2R)-3-phosphoglycerate + 2 H(+) = D-ribulose 1,5-bisphosphate + CO2 + H2O. It catalyses the reaction D-ribulose 1,5-bisphosphate + O2 = 2-phosphoglycolate + (2R)-3-phosphoglycerate + 2 H(+). RuBisCO catalyzes two reactions: the carboxylation of D-ribulose 1,5-bisphosphate, the primary event in carbon dioxide fixation, as well as the oxidative fragmentation of the pentose substrate in the photorespiration process. Both reactions occur simultaneously and in competition at the same active site. In Bambusa multiplex (Hedge bamboo), this protein is Ribulose bisphosphate carboxylase large chain.